The chain runs to 87 residues: Small ribosomal subunit protein bS21 (87 aa).

The span at 47–63 (YEKPSEKRARQKAEAVR) shows a compositional bias: basic and acidic residues. Residues 47–87 (YEKPSEKRARQKAEAVRRARKLARKRAQREGLLPMPKKPGR) form a disordered region. A compositionally biased stretch (basic residues) spans 64–73 (RARKLARKRA).

This sequence belongs to the bacterial ribosomal protein bS21 family.

The sequence is that of Small ribosomal subunit protein bS21 from Caulobacter vibrioides (strain ATCC 19089 / CIP 103742 / CB 15) (Caulobacter crescentus).